Here is a 537-residue protein sequence, read N- to C-terminus: MKRDHQEISGSGSNPAESSSIKGKLWEEDPDAGGMDDELLAVLGYKVRSSDMADVAQKLEMLEKVMGTAQEDGISQLGDTVHFNPSDLSGWVQNLLIEFNGSTTTPDPNFNDDSEYDLRAIPGVAAYPPVKSDPGLEITRKRAKTESSSSSSSTTTRPVVLIDSQEAGVRLVHTLMACAEAVQQDNLKLADALVKHIGLLASSQTGAMRKVATYFAEALARRIYRIFPPDSLDPSYNDKLQIPFYETCPYLKFAHFTANQAILEAFSMASRVHVIDFGLKQGMQWPALMQALALRPGGPPAFRLTGIGPPQPDNTDALQQVGWKLAQLAERIGIEFEFRGFVANSLADLEPEMLDIRPPEIEVVAVNAVFELHPLLARPGGIEKVVSSIKAMKPKIVTVVEQEANHNGPVFLDRFTEALHYYSTLFDSLEGSGVAPASQDLAMSELYLGRQICNVVACEGMDRVERHEPLTQWRTRMETAGVSPVHLGSNAYKQASMLLALFASGDGYRVEENNGCLMLGWHTRPLIAHLGLATRWY.

The tract at residues Met-1–Gly-33 is disordered. Low complexity predominate over residues Ser-9 to Ser-20. The DELLA motif signature appears at Asp-37 to Ala-41. A disordered region spans residues Lys-131–Arg-157. The span at Ser-147 to Thr-156 shows a compositional bias: low complexity. Residues Ile-162 to Ala-533 enclose the GRAS domain. The segment at Val-169–Ile-223 is leucine repeat I (LRI). The interval Gln-241–Gly-306 is VHIID. The VHIID motif lies at Val-272–Asp-276. The leucine repeat II (LRII) stretch occupies residues Gln-320 to Glu-352. A PFYRE region spans residues Val-364 to Asn-454. Residues Leu-372–Leu-376 carry the LXXLL motif motif. The segment at Ala-457–Ala-533 is SAW.

This sequence belongs to the GRAS family. DELLA subfamily. Phosphorylated. Post-translationally, ubiquitinated. Upon GA application it is ubiquitinated, leading to its subsequent degradation.

It localises to the nucleus. In terms of biological role, probable transcriptional regulator that acts as a repressor of the gibberellin (GA) signaling pathway. Probably acts by participating in large multiprotein complexes that represses transcription of GA-inducible genes. Upon GA application, it is degraded by the proteasome, allowing the GA signaling pathway. This Gossypium hirsutum (Upland cotton) protein is DELLA protein GAI (GAI).